The primary structure comprises 34 residues: Photosystem II reaction center protein Psb30 (34 aa).

Residues 9-29 traverse the membrane as a helical segment; it reads QLIATGTIMLAGPAVIVLLAL.

The protein belongs to the Psb30/Ycf12 family. As to quaternary structure, PSII is composed of 1 copy each of membrane proteins PsbA, PsbB, PsbC, PsbD, PsbE, PsbF, PsbH, PsbI, PsbJ, PsbK, PsbL, PsbM, PsbT, PsbX, PsbY, PsbZ, Psb30/Ycf12, peripheral proteins of the oxygen-evolving complex and a large number of cofactors. It forms dimeric complexes.

Its subcellular location is the plastid. The protein localises to the chloroplast thylakoid membrane. Its function is as follows. A core subunit of photosystem II (PSII), probably helps stabilize the reaction center. This is Photosystem II reaction center protein Psb30 from Phaeodactylum tricornutum (strain CCAP 1055/1).